Reading from the N-terminus, the 388-residue chain is Chorismate synthase (388 aa).

Positions 39 and 45 each coordinate NADP(+). FMN is bound by residues 130 to 132 (RSS), 251 to 252 (NA), G296, 311 to 315 (KPIPT), and R337.

This sequence belongs to the chorismate synthase family. Homotetramer. It depends on FMNH2 as a cofactor.

It carries out the reaction 5-O-(1-carboxyvinyl)-3-phosphoshikimate = chorismate + phosphate. The protein operates within metabolic intermediate biosynthesis; chorismate biosynthesis; chorismate from D-erythrose 4-phosphate and phosphoenolpyruvate: step 7/7. Functionally, catalyzes the anti-1,4-elimination of the C-3 phosphate and the C-6 proR hydrogen from 5-enolpyruvylshikimate-3-phosphate (EPSP) to yield chorismate, which is the branch point compound that serves as the starting substrate for the three terminal pathways of aromatic amino acid biosynthesis. This reaction introduces a second double bond into the aromatic ring system. This chain is Chorismate synthase, found in Geobacillus kaustophilus (strain HTA426).